The chain runs to 336 residues: Tetraacyldisaccharide 4'-kinase (336 aa).

Residue Thr-60–Thr-67 coordinates ATP.

Belongs to the LpxK family.

The catalysed reaction is a lipid A disaccharide + ATP = a lipid IVA + ADP + H(+). It functions in the pathway glycolipid biosynthesis; lipid IV(A) biosynthesis; lipid IV(A) from (3R)-3-hydroxytetradecanoyl-[acyl-carrier-protein] and UDP-N-acetyl-alpha-D-glucosamine: step 6/6. In terms of biological role, transfers the gamma-phosphate of ATP to the 4'-position of a tetraacyldisaccharide 1-phosphate intermediate (termed DS-1-P) to form tetraacyldisaccharide 1,4'-bis-phosphate (lipid IVA). This chain is Tetraacyldisaccharide 4'-kinase, found in Pseudomonas fluorescens (strain ATCC BAA-477 / NRRL B-23932 / Pf-5).